The following is a 273-amino-acid chain: 2,3,4,5-tetrahydropyridine-2,6-dicarboxylate N-succinyltransferase (273 aa).

The protein belongs to the transferase hexapeptide repeat family.

It localises to the cytoplasm. The catalysed reaction is (S)-2,3,4,5-tetrahydrodipicolinate + succinyl-CoA + H2O = (S)-2-succinylamino-6-oxoheptanedioate + CoA. Its pathway is amino-acid biosynthesis; L-lysine biosynthesis via DAP pathway; LL-2,6-diaminopimelate from (S)-tetrahydrodipicolinate (succinylase route): step 1/3. In Acinetobacter baumannii (strain AB307-0294), this protein is 2,3,4,5-tetrahydropyridine-2,6-dicarboxylate N-succinyltransferase.